The sequence spans 190 residues: Imidazoleglycerol-phosphate dehydratase (190 aa).

Belongs to the imidazoleglycerol-phosphate dehydratase family.

It localises to the cytoplasm. The catalysed reaction is D-erythro-1-(imidazol-4-yl)glycerol 3-phosphate = 3-(imidazol-4-yl)-2-oxopropyl phosphate + H2O. It participates in amino-acid biosynthesis; L-histidine biosynthesis; L-histidine from 5-phospho-alpha-D-ribose 1-diphosphate: step 6/9. The sequence is that of Imidazoleglycerol-phosphate dehydratase from Nitratiruptor sp. (strain SB155-2).